We begin with the raw amino-acid sequence, 492 residues long: Probable beta-1,4-xylosyltransferase IRX14H (492 aa).

Topologically, residues 1-33 (MKLSVFRLSYWNRRGSSFRSSPSLDPSFDGKSP) are cytoplasmic. Residues 34-54 (SSVFWFVIHGLCCLISLILGF) traverse the membrane as a helical; Signal-anchor for type II membrane protein segment. The Lumenal segment spans residues 55–492 (RFSHLVLFFL…FDGVKVSATS (438 aa)). 3 N-linked (GlcNAc...) asparagine glycosylation sites follow: Asn-99, Asn-196, and Asn-314. The tract at residues 457-492 (IKEAKSNSKPRVSKSKSYKEKQEPKAFDGVKVSATS) is disordered. Residues 473 to 484 (SYKEKQEPKAFD) show a composition bias toward basic and acidic residues.

Belongs to the glycosyltransferase 43 family. In terms of tissue distribution, expressed in developing interfascicular fibers and xylem cells in stems and developing secondary xylem in roots.

The protein resides in the golgi apparatus membrane. Its function is as follows. Involved in the synthesis of the hemicellulose glucuronoxylan, a major component of secondary cell walls. Probably involved in the elongation of glucuronoxylan xylosyl backbone. This chain is Probable beta-1,4-xylosyltransferase IRX14H (IRX14H), found in Arabidopsis thaliana (Mouse-ear cress).